Consider the following 2148-residue polypeptide: Polyketide synthase 1 (2148 aa).

The segment at 19-261 is N-terminal acylcarrier protein transacylase domain (SAT); the sequence is FIFGDQSSCN…TPLAVHAPYH (243 aa). The region spanning 394-829 is the Ketosynthase family 3 (KS3) domain; that stretch reads ESKIAIIGMS…GGNTALLVED (436 aa). Catalysis depends on for beta-ketoacyl synthase activity residues C566, H701, and H745. Residues 930-1236 are malonyl-CoA:ACP transacylase (MAT) domain; the sequence is FVFSGQGSQY…MRNKDGWQVL (307 aa). S1018 serves as the catalytic For acyl/malonyl transferase activity. The interval 1310–1624 is product template (PT) domain; it reads TASVHRMVHE…RKVLNTAMPP (315 aa). Positions 1314 to 1447 are N-terminal hotdog fold; it reads HRMVHESVEK…SSLHFEQPKV (134 aa). The region spanning 1314–1619 is the PKS/mFAS DH domain; sequence HRMVHESVEK…FQGIPRKVLN (306 aa). The active-site Proton acceptor; for dehydratase activity is the H1346. The interval 1474–1619 is C-terminal hotdog fold; that stretch reads LNSRMSSGVI…FQGIPRKVLN (146 aa). D1533 (proton donor; for dehydratase activity) is an active-site residue. Positions 1619-1655 are disordered; sequence NTAMPPPKSQNEAPVRSGPAKPAAKPPRSASSEHSGH. A compositionally biased stretch (low complexity) spans 1634 to 1650; it reads RSGPAKPAAKPPRSASS. Residues 1678–1752 enclose the Carrier 1 domain; the sequence is RNPMLPVFKI…DLAAQLGLDT (75 aa). The residue at position 1712 (S1712) is an O-(pantetheine 4'-phosphoryl)serine. Low complexity predominate over residues 1755 to 1790; sequence SDQSSGQSSSSGGLSPRSDSIGEITSSVTTPPSLSP. The interval 1755-1796 is disordered; it reads SDQSSGQSSSSGGLSPRSDSIGEITSSVTTPPSLSPRGSVSG. Residues 1793–1870 enclose the Carrier 2 domain; the sequence is SVSGSQCKDV…SFKHMFQQGH (78 aa). S1830 bears the O-(pantetheine 4'-phosphoryl)serine mark. The tract at residues 1882–2146 is thioesterase (TE) domain; that stretch reads LKQYRATSTL…ERVAAFIRST (265 aa). Catalysis depends on S1973, which acts as the For thioesterase activity.

It participates in pigment biosynthesis. In terms of biological role, polyketide synthase; part of the Pks1 gene cluster that mediates the biosynthesis of an anthraquinone derivative pigment that contributes to conidial pigmentation that provides protection from UV radiation, heat and cold stress. The polyketide synthase Pks1 produces 1-acetyl-2,4,6,8-tetrahydroxy-9,10-anthraquinone though condensation of acetyl-CoA with malonyl-CoA. The dehydratase EthD and the laccase Mlac1 further convert the anthraquinone derivative into the final conidial pigment. The chain is Polyketide synthase 1 from Metarhizium robertsii (strain ARSEF 23 / ATCC MYA-3075) (Metarhizium anisopliae (strain ARSEF 23)).